A 567-amino-acid chain; its full sequence is Unguisins hydrolase ungD (567 aa).

Belongs to the peptidase S12 family.

It participates in secondary metabolite biosynthesis. Hydrolase; part of the gene cluster that mediates the biosynthesis of the unguisins, gamma-aminobutyric acid (GABA)-containing fungal cyclic heptapeptides with the amino acid sequence cyclo-(D-Ala1-D-Val2-L-Phe3-D-Val4-D-Ala5-D-Trp6-GABA7) for unguisin A and cyclo-(D-Ala1-D-Val2-L-Leu3-D-Val4-D-Ala5-D-Trp6-GABA7) for unguisin B. Within the pathway, the hydrolase ungD catalyzes the hydrolysis between the D-tryptophan and GABA residues of unguisins A and B to produce the corresponding linear peptides. The alanine racemase ungC catalyzes the interconversion of L-alanine and D-alanine, providing the D-alanine which is accepted by the first adenylation domain of the nonribosomal peptide synthetase (NRPS) ungA. UngA is the main enzyme within the cluster which condenses the 7 residues using its respective 7 modules. The terminal condensation domain (Ct) is involved in cyclization with D-alanine and thereby releasing of unguisins A and B. The polypeptide is Unguisins hydrolase ungD (Aspergillus violaceofuscus (strain CBS 115571)).